The chain runs to 207 residues: Ribosomal RNA small subunit methyltransferase G (207 aa).

S-adenosyl-L-methionine contacts are provided by residues glycine 73, leucine 78, 124-125 (VE), and arginine 139.

This sequence belongs to the methyltransferase superfamily. RNA methyltransferase RsmG family.

It localises to the cytoplasm. The enzyme catalyses guanosine(527) in 16S rRNA + S-adenosyl-L-methionine = N(7)-methylguanosine(527) in 16S rRNA + S-adenosyl-L-homocysteine. Its function is as follows. Specifically methylates the N7 position of guanine in position 527 of 16S rRNA. The protein is Ribosomal RNA small subunit methyltransferase G of Shigella dysenteriae serotype 1 (strain Sd197).